A 587-amino-acid polypeptide reads, in one-letter code: Barrierpepsin (587 aa).

The first 24 residues, 1–24 (MSAINHLCLKLILASFAIINTITA), serve as a signal peptide directing secretion. The 349-residue stretch at 45-393 (YATTLDIGTP…DLDNYKISLA (349 aa)) folds into the Peptidase A1 domain. The active site involves D63. 3 N-linked (GlcNAc...) asparagine glycosylation sites follow: N84, N90, and N268. The active site involves D287. N-linked (GlcNAc...) asparagine glycosylation is present at N308. Cysteines 322 and 358 form a disulfide. Residues N366, N398, N468, N503, and N551 are each glycosylated (N-linked (GlcNAc...) asparagine). Positions 466–505 (SRNCSTKMPGTRSTTVLSKPTQNSAMHQSTGAVTQTSNET) are disordered.

It belongs to the peptidase A1 family.

Its subcellular location is the secreted. The enzyme catalyses Selective cleavage of 6-Leu-|-Lys-7 bond in the pheromone alpha-mating factor.. In terms of biological role, this protein called 'barrier activity' is excreted by yeast cells mating type a. It is probably a protease that cleaves alpha-factor and thus acts as an antagonist of this mating pheromone and establishes optimal pheromone concentration for conjugation. In Saccharomyces cerevisiae (strain ATCC 204508 / S288c) (Baker's yeast), this protein is Barrierpepsin (BAR1).